The sequence spans 289 residues: Type III pantothenate kinase (289 aa).

Position 9–16 (9–16 (DAGNSRVK)) interacts with ATP. Substrate is bound by residues Tyr106 and 113–116 (GSDR). Asp115 (proton acceptor) is an active-site residue. ATP is bound at residue Thr139. Position 209 (Thr209) interacts with substrate.

It belongs to the type III pantothenate kinase family. Homodimer. Requires NH4(+) as cofactor. The cofactor is K(+).

It localises to the cytoplasm. It carries out the reaction (R)-pantothenate + ATP = (R)-4'-phosphopantothenate + ADP + H(+). It functions in the pathway cofactor biosynthesis; coenzyme A biosynthesis; CoA from (R)-pantothenate: step 1/5. In terms of biological role, catalyzes the phosphorylation of pantothenate (Pan), the first step in CoA biosynthesis. This Paraburkholderia phymatum (strain DSM 17167 / CIP 108236 / LMG 21445 / STM815) (Burkholderia phymatum) protein is Type III pantothenate kinase.